We begin with the raw amino-acid sequence, 592 residues long: 2-succinyl-5-enolpyruvyl-6-hydroxy-3-cyclohexene-1-carboxylate synthase (592 aa).

The protein belongs to the TPP enzyme family. MenD subfamily. Homodimer. Requires Mg(2+) as cofactor. It depends on Mn(2+) as a cofactor. Thiamine diphosphate serves as cofactor.

It carries out the reaction isochorismate + 2-oxoglutarate + H(+) = 5-enolpyruvoyl-6-hydroxy-2-succinyl-cyclohex-3-ene-1-carboxylate + CO2. It functions in the pathway quinol/quinone metabolism; 1,4-dihydroxy-2-naphthoate biosynthesis; 1,4-dihydroxy-2-naphthoate from chorismate: step 2/7. The protein operates within quinol/quinone metabolism; menaquinone biosynthesis. Functionally, catalyzes the thiamine diphosphate-dependent decarboxylation of 2-oxoglutarate and the subsequent addition of the resulting succinic semialdehyde-thiamine pyrophosphate anion to isochorismate to yield 2-succinyl-5-enolpyruvyl-6-hydroxy-3-cyclohexene-1-carboxylate (SEPHCHC). This chain is 2-succinyl-5-enolpyruvyl-6-hydroxy-3-cyclohexene-1-carboxylate synthase, found in Haloarcula marismortui (strain ATCC 43049 / DSM 3752 / JCM 8966 / VKM B-1809) (Halobacterium marismortui).